A 260-amino-acid chain; its full sequence is Centromere protein K (260 aa).

A coiled-coil region spans residues 84–173 (EEELQKVKKE…KKLMNALGEF (90 aa)).

The protein belongs to the CENP-K/MCM22 family. In terms of assembly, component of the CENPA-HI complex, at least composed of CENPH, CENPI, CENPK, CENPL, CENPM, CENPO and CENPP.

It is found in the nucleus. It localises to the chromosome. The protein localises to the centromere. The protein resides in the kinetochore. In terms of biological role, component of the CENPA-HI complex, a centromeric complex involved in assembly of kinetochore proteins, mitotic progression and chromosome segregation. This is Centromere protein K (CENPK) from Gallus gallus (Chicken).